Here is a 536-residue protein sequence, read N- to C-terminus: Membrane protein insertase YidC (536 aa).

Transmembrane regions (helical) follow at residues 5 to 25 (LIIA…IFPT), 353 to 373 (GNYG…FFPL), 418 to 438 (VNPL…FGLY), and 495 to 515 (MLML…GLVI).

It belongs to the OXA1/ALB3/YidC family. Type 1 subfamily. In terms of assembly, interacts with the Sec translocase complex via SecD. Specifically interacts with transmembrane segments of nascent integral membrane proteins during membrane integration.

The protein localises to the cell inner membrane. Its function is as follows. Required for the insertion and/or proper folding and/or complex formation of integral membrane proteins into the membrane. Involved in integration of membrane proteins that insert both dependently and independently of the Sec translocase complex, as well as at least some lipoproteins. Aids folding of multispanning membrane proteins. In Geobacter sp. (strain M21), this protein is Membrane protein insertase YidC.